Reading from the N-terminus, the 139-residue chain is Protein FAM237B (139 aa).

The N-terminal stretch at Met1–Ala24 is a signal peptide. Methionine amide is present on Met112. The propeptide at Gly113–Glu139 is removed in the mature form.

In terms of processing, the active form requires C-terminal amidation and disulfide bond formation.

It localises to the secreted. Functionally, may be capable of activating GPR83 via the GNAQ signaling pathway. The chain is Protein FAM237B from Homo sapiens (Human).